Here is a 454-residue protein sequence, read N- to C-terminus: CCA-adding enzyme (454 aa).

Residues serine 59 and arginine 62 each contribute to the ATP site. The CTP site is built by serine 59 and arginine 62. Mg(2+) is bound by residues aspartate 71, aspartate 73, and aspartate 125. ATP is bound by residues histidine 148, lysine 167, and tyrosine 176. CTP is bound by residues histidine 148, lysine 167, and tyrosine 176.

It belongs to the tRNA nucleotidyltransferase/poly(A) polymerase family. Archaeal CCA-adding enzyme subfamily. Homodimer. It depends on Mg(2+) as a cofactor.

The enzyme catalyses a tRNA precursor + 2 CTP + ATP = a tRNA with a 3' CCA end + 3 diphosphate. It carries out the reaction a tRNA with a 3' CCA end + 2 CTP + ATP = a tRNA with a 3' CCACCA end + 3 diphosphate. In terms of biological role, catalyzes the addition and repair of the essential 3'-terminal CCA sequence in tRNAs without using a nucleic acid template. Adds these three nucleotides in the order of C, C, and A to the tRNA nucleotide-73, using CTP and ATP as substrates and producing inorganic pyrophosphate. tRNA 3'-terminal CCA addition is required both for tRNA processing and repair. Also involved in tRNA surveillance by mediating tandem CCA addition to generate a CCACCA at the 3' terminus of unstable tRNAs. While stable tRNAs receive only 3'-terminal CCA, unstable tRNAs are marked with CCACCA and rapidly degraded. The polypeptide is CCA-adding enzyme (Methanosarcina mazei (strain ATCC BAA-159 / DSM 3647 / Goe1 / Go1 / JCM 11833 / OCM 88) (Methanosarcina frisia)).